We begin with the raw amino-acid sequence, 268 residues long: Orotidine 5'-phosphate decarboxylase (268 aa).

Substrate-binding positions include aspartate 38, 60–62, 92–101, tyrosine 218, and arginine 236; these read KTH and DRKFADIGNT. Lysine 94 functions as the Proton donor in the catalytic mechanism.

This sequence belongs to the OMP decarboxylase family.

The catalysed reaction is orotidine 5'-phosphate + H(+) = UMP + CO2. Its pathway is pyrimidine metabolism; UMP biosynthesis via de novo pathway; UMP from orotate: step 2/2. This chain is Orotidine 5'-phosphate decarboxylase (URA3), found in Candida parapsilosis (Yeast).